Reading from the N-terminus, the 464-residue chain is MGKRLLDKLWERHVVTTNENGLDLLYIDLHLVHEVTSPQAFEGLRLTNRTVRRPDLTFATMDHNIPTKDVWNITDRIAKQQLDTLRENCKQFQVPLADIGDEEQGIVHVIGPELGLTQPGKTIVCGDSHTATHGAFGALAFGIGTSEVEHVLATQTLWQRKPKAMGIELKGKLQKGVYAKDIILHLLSKYGVAVGTGYVMEFYGETIGTMEMEERMTLCNMAIEGGAKAGIIAPDEKTFAYVKGRKYAPRDYETFEKKWFELYTDADAIYDLHISIDVTDLAPYVTWGTNPSMGVRIDEKLPEKHDVNDERAFSYMGLIPGQSTYDIPVQHVFIGSCTNSRLSDLEIAASVVKGRKVKEGVRALVVPGSKRVRDAAMQKGLHHIFEEAGFEWREPGCSMCLGMNPDQVPEGEHCASTSNRNFEGRQGKGARTHLVSPAMAAAAALYGHFVDIRKESYDGAISYS.

[4Fe-4S] cluster-binding residues include Cys337, Cys397, and Cys400.

Belongs to the aconitase/IPM isomerase family. LeuC type 1 subfamily. Heterodimer of LeuC and LeuD. [4Fe-4S] cluster serves as cofactor.

The catalysed reaction is (2R,3S)-3-isopropylmalate = (2S)-2-isopropylmalate. Its pathway is amino-acid biosynthesis; L-leucine biosynthesis; L-leucine from 3-methyl-2-oxobutanoate: step 2/4. Its function is as follows. Catalyzes the isomerization between 2-isopropylmalate and 3-isopropylmalate, via the formation of 2-isopropylmaleate. The chain is 3-isopropylmalate dehydratase large subunit from Bacillus anthracis (strain A0248).